A 166-amino-acid chain; its full sequence is Lipoprotein signal peptidase (166 aa).

A run of 4 helical transmembrane segments spans residues 9–29 (ASGALAPWLGISLIVILFDQL), 45–65 (ALTSFFNLVLVYNRGAAFGFL), 71–91 (WQRWAFTALGVGATLVICFLL), and 100–120 (FSVSLALILGGALGNVIDRLV). Active-site residues include aspartate 126 and aspartate 144. A helical membrane pass occupies residues 135-155 (WHFPAFNLADSAITVGAVLLI).

The protein belongs to the peptidase A8 family.

It is found in the cell inner membrane. The enzyme catalyses Release of signal peptides from bacterial membrane prolipoproteins. Hydrolyzes -Xaa-Yaa-Zaa-|-(S,diacylglyceryl)Cys-, in which Xaa is hydrophobic (preferably Leu), and Yaa (Ala or Ser) and Zaa (Gly or Ala) have small, neutral side chains.. The protein operates within protein modification; lipoprotein biosynthesis (signal peptide cleavage). Functionally, this protein specifically catalyzes the removal of signal peptides from prolipoproteins. The polypeptide is Lipoprotein signal peptidase (Burkholderia cenocepacia (strain HI2424)).